Reading from the N-terminus, the 237-residue chain is Ribosomal RNA small subunit methyltransferase G (237 aa).

Residues G78, F83, 129–130 (AE), and R148 each bind S-adenosyl-L-methionine.

The protein belongs to the methyltransferase superfamily. RNA methyltransferase RsmG family.

It is found in the cytoplasm. In terms of biological role, specifically methylates the N7 position of a guanine in 16S rRNA. This is Ribosomal RNA small subunit methyltransferase G from Streptococcus equi subsp. equi (strain 4047).